We begin with the raw amino-acid sequence, 300 residues long: Protoheme IX farnesyltransferase (300 aa).

A run of 9 helical transmembrane segments spans residues 24-44 (VTQL…PGMV), 48-68 (VLLG…AINC), 94-114 (LQIL…LYTF), 118-138 (LTIW…TLLL), 146-166 (IVIG…AVTG), 172-192 (AWIL…VLAL), 217-237 (LHIL…FISG), 239-259 (SGAV…AYAW), and 278-298 (IVYL…RPVI).

It belongs to the UbiA prenyltransferase family. Protoheme IX farnesyltransferase subfamily.

It localises to the cell inner membrane. It carries out the reaction heme b + (2E,6E)-farnesyl diphosphate + H2O = Fe(II)-heme o + diphosphate. The protein operates within porphyrin-containing compound metabolism; heme O biosynthesis; heme O from protoheme: step 1/1. Functionally, converts heme B (protoheme IX) to heme O by substitution of the vinyl group on carbon 2 of heme B porphyrin ring with a hydroxyethyl farnesyl side group. This chain is Protoheme IX farnesyltransferase, found in Burkholderia mallei (strain NCTC 10247).